The chain runs to 289 residues: Cysteine-rich venom protein Mr30 (289 aa).

The signal sequence occupies residues 1–24 (MLSTMQTVGAILMLSIVFVAGTKR). Position 33 is a 4-carboxyglutamate (glutamate 33). Positions 62–184 (VRMHNVIRAT…GEDRYFVCNY (123 aa)) constitute an SCP domain.

The protein belongs to the CRISP family. In terms of processing, contains 11 disulfide bonds. In terms of tissue distribution, expressed by the venom duct.

It is found in the secreted. Has no proteolytic activity. This Conus marmoreus (Marble cone) protein is Cysteine-rich venom protein Mr30.